Consider the following 385-residue polypeptide: Acetoin utilization protein AcuC (385 aa).

This sequence belongs to the histone deacetylase family.

Its pathway is ketone degradation; acetoin degradation. Its function is as follows. Role in growth on acetoin or butanediol. Involved in the breakdown of these compounds used as a carbon source. This is Acetoin utilization protein AcuC (acuC) from Staphylococcus xylosus.